The primary structure comprises 208 residues: MKTYQGTHGVHILEYQSKINKLLCYLTNRYPRLIAVRVDLHYPKIVDNGDNICCFPNLEPGVISRMRESLRAKLEADRTRKVREDKRIYRCPLFIIWAKEYSESGKCHYHICLLFNKDAYYHLGDYDQDDNLRGMITGAWYSALRLERDDHPGLVHFPENCKYVLDTNSTDFQQNYQALLTRLDYLTKVESKVFGEGDRNFGCSQIEL.

The protein to E.coli YfjJ.

This is an uncharacterized protein from Escherichia coli (strain K12).